The following is a 65-amino-acid chain: Large ribosomal subunit protein bL33c (65 aa).

Belongs to the bacterial ribosomal protein bL33 family.

The protein resides in the plastid. It localises to the chloroplast. In Staurastrum punctulatum (Green alga), this protein is Large ribosomal subunit protein bL33c.